The chain runs to 289 residues: 4-diphosphocytidyl-2-C-methyl-D-erythritol kinase (289 aa).

Residue Lys-11 is part of the active site. An ATP-binding site is contributed by 93–103 (PLAAGLAGGSA). Asp-135 is an active-site residue.

It belongs to the GHMP kinase family. IspE subfamily.

The catalysed reaction is 4-CDP-2-C-methyl-D-erythritol + ATP = 4-CDP-2-C-methyl-D-erythritol 2-phosphate + ADP + H(+). The protein operates within isoprenoid biosynthesis; isopentenyl diphosphate biosynthesis via DXP pathway; isopentenyl diphosphate from 1-deoxy-D-xylulose 5-phosphate: step 3/6. Its function is as follows. Catalyzes the phosphorylation of the position 2 hydroxy group of 4-diphosphocytidyl-2C-methyl-D-erythritol. This chain is 4-diphosphocytidyl-2-C-methyl-D-erythritol kinase, found in Thermoanaerobacter sp. (strain X514).